A 692-amino-acid chain; its full sequence is Elongation factor G (692 aa).

One can recognise a tr-type G domain in the interval 8 to 282 (EKVRNIGIAA…AVVDYLPAPS (275 aa)). GTP is bound by residues 17–24 (AHIDAGKT), 81–85 (DTPGH), and 135–138 (NKMD).

This sequence belongs to the TRAFAC class translation factor GTPase superfamily. Classic translation factor GTPase family. EF-G/EF-2 subfamily.

Its subcellular location is the cytoplasm. In terms of biological role, catalyzes the GTP-dependent ribosomal translocation step during translation elongation. During this step, the ribosome changes from the pre-translocational (PRE) to the post-translocational (POST) state as the newly formed A-site-bound peptidyl-tRNA and P-site-bound deacylated tRNA move to the P and E sites, respectively. Catalyzes the coordinated movement of the two tRNA molecules, the mRNA and conformational changes in the ribosome. The sequence is that of Elongation factor G from Nostoc punctiforme (strain ATCC 29133 / PCC 73102).